The chain runs to 436 residues: AMSH-like protease (436 aa).

Met-1 carries the post-translational modification N-acetylmethionine. Residues Ser-25 and Ser-242 each carry the phosphoserine modification. The 129-residue stretch at 269–397 (VVLPEDLCHK…IFRLTNAGML (129 aa)) folds into the MPN domain. Residues His-347, His-349, Asp-360, His-362, Cys-402, His-408, and His-410 each contribute to the Zn(2+) site. The short motif at 347–360 (HTHPTQTAFLSSVD) is the JAMM motif element.

This sequence belongs to the peptidase M67C family. Zn(2+) serves as cofactor. Ubiquitously expressed.

With respect to regulation, inhibited by UbV(SP.1), an ubiquitin variant that also inhibits STAMBP. Functionally, zinc metalloprotease that specifically cleaves 'Lys-63'-linked polyubiquitin chains. Acts as a positive regulator of the TORC1 signaling pathway by mediating 'Lys-63'-linked deubiquitination of SESN2, thereby inhibiting SESN2-interaction with the GATOR2 complex. Does not cleave 'Lys-48'-linked polyubiquitin chains. The sequence is that of AMSH-like protease from Homo sapiens (Human).